Reading from the N-terminus, the 62-residue chain is U-myrmeciitoxin(01)-Mg3a (62 aa).

The N-terminal stretch at 1–24 (MKTTVILLLAIAIIFAIMTTLTSA) is a signal peptide.

Expressed by the venom gland.

The protein resides in the secreted. Its function is as follows. May have antimicrobial properties, like most ant linear peptides. This chain is U-myrmeciitoxin(01)-Mg3a, found in Myrmecia gulosa (Red bulldog ant).